The primary structure comprises 360 residues: UDP-arabinopyranose mutase 2 (360 aa).

Valine 2 is subject to N-acetylvaline. The short motif at 110–112 is the DXD motif element; that stretch reads DDD. Arginine 158 carries N-linked (Glc...) arginine glycosylation.

Belongs to the RGP family. Heteromers with RGP1, RGP4 and RGP5. Mn(2+) is required as a cofactor. Mg(2+) serves as cofactor. In terms of processing, reversibly glycosylated in vitro by UDP-glucose, UDP-xylose and UDP-galactose, but not UDP-mannose. In terms of tissue distribution, predominantly expressed in shoot and root apical meristems. Expressed in epidermal cells of leaves, inflorescence stems and seed coat. Expressed in pollen.

It localises to the cytoplasm. The protein localises to the cytosol. It is found in the golgi apparatus. It catalyses the reaction UDP-beta-L-arabinofuranose = UDP-beta-L-arabinopyranose. In terms of biological role, UDP-L-arabinose mutase involved in the biosynthesis of cell wall non-cellulosic polysaccharides. Catalyzes the interconvertion of UDP-L-arabinopyranose (UDP-Arap) and UDP-L-arabinofuranose (UDP-Araf) in vitro. Preferentially catalyzes the formation of UDP-Arap from UDP-Araf. At thermodynamic equilibrium in vitro the ratio of the pyranose form over the furanose form is 95:5. Is not active on other UDP-sugars (UDP-Gal, UDP-Xyl, UDP-Glc, GDP-Man and GDP-Fuc). Functions redundantly with RGP2 and is essential for proper cell walls and pollen development. Probably involved in the formation of the pectocellulosic cell wall layer intine. Is probably active as heteromer in vivo. The protein is UDP-arabinopyranose mutase 2 of Arabidopsis thaliana (Mouse-ear cress).